Consider the following 130-residue polypeptide: Small ribosomal subunit protein uS8 (130 aa).

The protein belongs to the universal ribosomal protein uS8 family. In terms of assembly, part of the 30S ribosomal subunit. Contacts proteins S5 and S12.

Its function is as follows. One of the primary rRNA binding proteins, it binds directly to 16S rRNA central domain where it helps coordinate assembly of the platform of the 30S subunit. The sequence is that of Small ribosomal subunit protein uS8 from Yersinia enterocolitica serotype O:8 / biotype 1B (strain NCTC 13174 / 8081).